The chain runs to 441 residues: Membrane-bound protease PH1510 (441 aa).

A signal peptide spans 1 to 20 (MRRILLSMIVLIFLASPILA). Residue 64 to 67 (GGRA) participates in substrate binding. The active-site Nucleophile is Ser97. 119–124 (ACRPIL) contributes to the substrate binding site. Residue Lys138 is the Proton donor/acceptor of the active site. The next 4 helical transmembrane spans lie at 239–259 (VAYL…LTPG), 271–291 (IILA…ILLI), 307–327 (FGLF…LLFG), and 344–364 (ILII…MAAV).

The protein belongs to the peptidase S14 family. As to quaternary structure, homodimer.

It is found in the membrane. Inhibited by divalent metal cations, including Mg(2+), Mn(2+), Ca(2+) and Zn(2+). Mildly inhibited by 0.01 % SDS and 0.1% dodecyl-beta-D-maltoside. Activity is nearly abolished by 1 % SDS. Its function is as follows. Protease that cleaves its substrates preferentially near hydrophobic or aromatic amino acid residues. Can degrade casein and the stomatin homolog PH1511 (in vitro). In Pyrococcus horikoshii (strain ATCC 700860 / DSM 12428 / JCM 9974 / NBRC 100139 / OT-3), this protein is Membrane-bound protease PH1510.